The chain runs to 153 residues: UPF0260 protein YcgN (153 aa).

Belongs to the UPF0260 family.

This chain is UPF0260 protein YcgN, found in Salmonella typhi.